The primary structure comprises 251 residues: Hydroxyacylglutathione hydrolase (251 aa).

Residues H53, H55, D57, H58, H110, D127, and H165 each contribute to the Zn(2+) site.

The protein belongs to the metallo-beta-lactamase superfamily. Glyoxalase II family. In terms of assembly, monomer. Requires Zn(2+) as cofactor.

It carries out the reaction an S-(2-hydroxyacyl)glutathione + H2O = a 2-hydroxy carboxylate + glutathione + H(+). It participates in secondary metabolite metabolism; methylglyoxal degradation; (R)-lactate from methylglyoxal: step 2/2. In terms of biological role, thiolesterase that catalyzes the hydrolysis of S-D-lactoyl-glutathione to form glutathione and D-lactic acid. In Salmonella dublin (strain CT_02021853), this protein is Hydroxyacylglutathione hydrolase.